The chain runs to 232 residues: Probable caffeoyl-CoA O-methyltransferase At4g26220 (232 aa).

Lys-7 serves as a coordination point for substrate. Residues Thr-49, Glu-71, 73–74 (GV), Ser-79, Asp-97, and Ala-126 each bind S-adenosyl-L-methionine. Asp-149 serves as a coordination point for substrate. An a divalent metal cation-binding site is contributed by Asp-149. Asp-151 is an S-adenosyl-L-methionine binding site. Positions 175 and 176 each coordinate a divalent metal cation.

Belongs to the class I-like SAM-binding methyltransferase superfamily. Cation-dependent O-methyltransferase family. CCoAMT subfamily. A divalent metal cation is required as a cofactor.

The enzyme catalyses (E)-caffeoyl-CoA + S-adenosyl-L-methionine = (E)-feruloyl-CoA + S-adenosyl-L-homocysteine + H(+). The protein operates within aromatic compound metabolism; phenylpropanoid biosynthesis. Methylates caffeoyl-CoA to feruloyl-CoA and 5-hydroxyferuloyl-CoA to sinapoyl-CoA. Plays a role in the synthesis of feruloylated polysaccharides. Involved in the reinforcement of the plant cell wall. Also involved in the responding to wounding or pathogen challenge by the increased formation of cell wall-bound ferulic acid polymers. This is Probable caffeoyl-CoA O-methyltransferase At4g26220 from Arabidopsis thaliana (Mouse-ear cress).